The following is a 284-amino-acid chain: Bifunctional protein FolD 1 (284 aa).

NADP(+) is bound by residues 166-168 and I232; that span reads GAS.

It belongs to the tetrahydrofolate dehydrogenase/cyclohydrolase family. In terms of assembly, homodimer.

The enzyme catalyses (6R)-5,10-methylene-5,6,7,8-tetrahydrofolate + NADP(+) = (6R)-5,10-methenyltetrahydrofolate + NADPH. It catalyses the reaction (6R)-5,10-methenyltetrahydrofolate + H2O = (6R)-10-formyltetrahydrofolate + H(+). The protein operates within one-carbon metabolism; tetrahydrofolate interconversion. Its function is as follows. Catalyzes the oxidation of 5,10-methylenetetrahydrofolate to 5,10-methenyltetrahydrofolate and then the hydrolysis of 5,10-methenyltetrahydrofolate to 10-formyltetrahydrofolate. This chain is Bifunctional protein FolD 1, found in Pseudomonas syringae pv. syringae (strain B728a).